Consider the following 277-residue polypeptide: Probable endonuclease 4 (277 aa).

9 residues coordinate Zn(2+): histidine 67, histidine 107, glutamate 141, aspartate 173, histidine 176, histidine 207, aspartate 220, histidine 222, and glutamate 252.

It belongs to the AP endonuclease 2 family. The cofactor is Zn(2+).

It carries out the reaction Endonucleolytic cleavage to 5'-phosphooligonucleotide end-products.. Endonuclease IV plays a role in DNA repair. It cleaves phosphodiester bonds at apurinic or apyrimidinic (AP) sites, generating a 3'-hydroxyl group and a 5'-terminal sugar phosphate. The sequence is that of Probable endonuclease 4 from Finegoldia magna (strain ATCC 29328 / DSM 20472 / WAL 2508) (Peptostreptococcus magnus).